The following is a 301-amino-acid chain: Polyamine aminopropyltransferase (301 aa).

The PABS domain maps to 4-240; it reads WHWLLEWQTP…GLWGFVYGGV (237 aa). Gln-33 contributes to the S-methyl-5'-thioadenosine binding site. His-64 and Glu-89 together coordinate spermidine. Residues Asp-109 and 141-142 contribute to the S-methyl-5'-thioadenosine site; that span reads DG. Catalysis depends on Asp-159, which acts as the Proton acceptor.

This sequence belongs to the spermidine/spermine synthase family. Homodimer or homotetramer.

It localises to the cytoplasm. It catalyses the reaction S-adenosyl 3-(methylsulfanyl)propylamine + putrescine = S-methyl-5'-thioadenosine + spermidine + H(+). The protein operates within amine and polyamine biosynthesis; spermidine biosynthesis; spermidine from putrescine: step 1/1. Functionally, catalyzes the irreversible transfer of a propylamine group from the amino donor S-adenosylmethioninamine (decarboxy-AdoMet) to putrescine (1,4-diaminobutane) to yield spermidine. In Saccharolobus islandicus (strain Y.N.15.51 / Yellowstone #2) (Sulfolobus islandicus), this protein is Polyamine aminopropyltransferase.